Reading from the N-terminus, the 156-residue chain is Small ribosomal subunit protein uS7 (156 aa).

The protein belongs to the universal ribosomal protein uS7 family. As to quaternary structure, part of the 30S ribosomal subunit. Contacts proteins S9 and S11.

In terms of biological role, one of the primary rRNA binding proteins, it binds directly to 16S rRNA where it nucleates assembly of the head domain of the 30S subunit. Is located at the subunit interface close to the decoding center, probably blocks exit of the E-site tRNA. This is Small ribosomal subunit protein uS7 from Beutenbergia cavernae (strain ATCC BAA-8 / DSM 12333 / CCUG 43141 / JCM 11478 / NBRC 16432 / NCIMB 13614 / HKI 0122).